The primary structure comprises 557 residues: Urocanate hydratase (557 aa).

Residues 1–20 (MSNPRHNEREVRSPRGDELN) are disordered. NAD(+) is bound by residues 52–53 (GG), Gln-130, 176–178 (GMG), Glu-196, Arg-201, 242–243 (NA), 263–267 (QTSAH), 273–274 (YL), and Tyr-322. Cys-410 is a catalytic residue. NAD(+) is bound at residue Gly-492.

The protein belongs to the urocanase family. The cofactor is NAD(+).

Its subcellular location is the cytoplasm. The catalysed reaction is 4-imidazolone-5-propanoate = trans-urocanate + H2O. The protein operates within amino-acid degradation; L-histidine degradation into L-glutamate; N-formimidoyl-L-glutamate from L-histidine: step 2/3. Its function is as follows. Catalyzes the conversion of urocanate to 4-imidazolone-5-propionate. The polypeptide is Urocanate hydratase (Brucella ovis (strain ATCC 25840 / 63/290 / NCTC 10512)).